The chain runs to 288 residues: tRNA-cytidine(32) 2-sulfurtransferase (288 aa).

The PP-loop motif motif lies at 70–75 (SGGKDS). Residues cysteine 145, cysteine 148, and cysteine 236 each contribute to the [4Fe-4S] cluster site.

Belongs to the TtcA family. Homodimer. Requires Mg(2+) as cofactor. It depends on [4Fe-4S] cluster as a cofactor.

The protein resides in the cytoplasm. It carries out the reaction cytidine(32) in tRNA + S-sulfanyl-L-cysteinyl-[cysteine desulfurase] + AH2 + ATP = 2-thiocytidine(32) in tRNA + L-cysteinyl-[cysteine desulfurase] + A + AMP + diphosphate + H(+). It participates in tRNA modification. Its function is as follows. Catalyzes the ATP-dependent 2-thiolation of cytidine in position 32 of tRNA, to form 2-thiocytidine (s(2)C32). The sulfur atoms are provided by the cysteine/cysteine desulfurase (IscS) system. This chain is tRNA-cytidine(32) 2-sulfurtransferase, found in Bartonella tribocorum (strain CIP 105476 / IBS 506).